Consider the following 782-residue polypeptide: Endonuclease MutS2 (782 aa).

Position 336 to 343 (336 to 343) interacts with ATP; the sequence is GPNTGGKT. The Smr domain occupies 707 to 782; that stretch reads LDLRGYRYEE…GFGVTVAELK (76 aa).

This sequence belongs to the DNA mismatch repair MutS family. MutS2 subfamily. Homodimer. Binds to stalled ribosomes, contacting rRNA.

Functionally, endonuclease that is involved in the suppression of homologous recombination and thus may have a key role in the control of bacterial genetic diversity. Acts as a ribosome collision sensor, splitting the ribosome into its 2 subunits. Detects stalled/collided 70S ribosomes which it binds and splits by an ATP-hydrolysis driven conformational change. Acts upstream of the ribosome quality control system (RQC), a ribosome-associated complex that mediates the extraction of incompletely synthesized nascent chains from stalled ribosomes and their subsequent degradation. Probably generates substrates for RQC. The chain is Endonuclease MutS2 from Staphylococcus epidermidis (strain ATCC 35984 / DSM 28319 / BCRC 17069 / CCUG 31568 / BM 3577 / RP62A).